A 98-amino-acid chain; its full sequence is NADH-ubiquinone oxidoreductase chain 4L (98 aa).

3 helical membrane passes run 2 to 22, 29 to 49, and 61 to 81; these read SLVY…LLMF, SLLC…ILIL, and IIML…LVMV.

The protein belongs to the complex I subunit 4L family. Core subunit of respiratory chain NADH dehydrogenase (Complex I) which is composed of 45 different subunits.

It is found in the mitochondrion inner membrane. It catalyses the reaction a ubiquinone + NADH + 5 H(+)(in) = a ubiquinol + NAD(+) + 4 H(+)(out). In terms of biological role, core subunit of the mitochondrial membrane respiratory chain NADH dehydrogenase (Complex I) which catalyzes electron transfer from NADH through the respiratory chain, using ubiquinone as an electron acceptor. Part of the enzyme membrane arm which is embedded in the lipid bilayer and involved in proton translocation. This chain is NADH-ubiquinone oxidoreductase chain 4L (MT-ND4L), found in Galemys pyrenaicus (Iberian desman).